Here is a 109-residue protein sequence, read N- to C-terminus: Cell cycle protein GpsB (109 aa).

The stretch at 36–63 (IKDYETYAALVKSLRQEIADLKEELTRK) forms a coiled coil.

This sequence belongs to the GpsB family. Forms polymers through the coiled coil domains. Interacts with PBP1, MreC and EzrA.

The protein resides in the cytoplasm. In terms of biological role, divisome component that associates with the complex late in its assembly, after the Z-ring is formed, and is dependent on DivIC and PBP2B for its recruitment to the divisome. Together with EzrA, is a key component of the system that regulates PBP1 localization during cell cycle progression. Its main role could be the removal of PBP1 from the cell pole after pole maturation is completed. Also contributes to the recruitment of PBP1 to the division complex. Not essential for septum formation. This Streptococcus pneumoniae serotype 4 (strain ATCC BAA-334 / TIGR4) protein is Cell cycle protein GpsB.